The following is a 697-amino-acid chain: Glycine--tRNA ligase beta subunit (697 aa).

It belongs to the class-II aminoacyl-tRNA synthetase family. In terms of assembly, tetramer of two alpha and two beta subunits.

Its subcellular location is the cytoplasm. It carries out the reaction tRNA(Gly) + glycine + ATP = glycyl-tRNA(Gly) + AMP + diphosphate. This is Glycine--tRNA ligase beta subunit from Cereibacter sphaeroides (strain ATCC 17023 / DSM 158 / JCM 6121 / CCUG 31486 / LMG 2827 / NBRC 12203 / NCIMB 8253 / ATH 2.4.1.) (Rhodobacter sphaeroides).